The chain runs to 397 residues: B3 domain-containing protein At4g34400 (397 aa).

A DNA-binding region (TF-B3) is located at residues 14 to 107 (PRFFTVFVSH…IFEVSIFRGY (94 aa)). The interval 118–255 (ELEEEEEDSV…SSYAPDKEDT (138 aa)) is disordered. A compositionally biased stretch (basic and acidic residues) spans 137 to 160 (TGAKSEMKNTVPEGRDKGKSKVEV). 3 stretches are compositionally biased toward acidic residues: residues 161–186 (VEDS…TDTD), 212–227 (SSDD…DSDY), and 235–246 (DIEENSISEEDS).

It is found in the nucleus. The polypeptide is B3 domain-containing protein At4g34400 (Arabidopsis thaliana (Mouse-ear cress)).